The following is a 326-amino-acid chain: Putative HTH-type transcriptional regulatory protein MmarC7_1702 (326 aa).

An HTH cro/C1-type domain is found at 128–183 (LRETREKLKISVGELAEISRVSRKTIYKYEQNEANPSAEVAIKIEEYLDVPLIKGI). The segment at residues 139 to 158 (VGELAEISRVSRKTIYKYEQ) is a DNA-binding region (H-T-H motif).

This chain is Putative HTH-type transcriptional regulatory protein MmarC7_1702, found in Methanococcus maripaludis (strain C7 / ATCC BAA-1331).